A 301-amino-acid chain; its full sequence is Haloalkane dehalogenase (301 aa).

One can recognise an AB hydrolase-1 domain in the interval 47–284 (PPIVLLHGEP…INASHFIQED (238 aa)). D123 acts as the Nucleophile in catalysis. The active-site Proton donor is the D250. The Proton acceptor role is filled by H279.

Belongs to the haloalkane dehalogenase family. Type 1 subfamily. In terms of assembly, monomer.

It catalyses the reaction 1-haloalkane + H2O = a halide anion + a primary alcohol + H(+). Its function is as follows. Catalyzes hydrolytic cleavage of carbon-halogen bonds in halogenated aliphatic compounds, leading to the formation of the corresponding primary alcohols, halide ions and protons. The protein is Haloalkane dehalogenase of Mycolicibacterium paratuberculosis (strain ATCC BAA-968 / K-10) (Mycobacterium paratuberculosis).